The sequence spans 481 residues: Hyaluronidase-4 (481 aa).

Topologically, residues 1 to 11 (MQLLPEGQLRL) are cytoplasmic. A helical membrane pass occupies residues 12–32 (CVFQPVHLTSGLLILFILKSI). Residues 33–455 (SSLKPARLPV…CREMTEASGP (423 aa)) lie on the Extracellular side of the membrane. Intrachain disulfides connect Cys-59-Cys-351, Cys-223-Cys-237, Cys-376-Cys-387, Cys-381-Cys-435, and Cys-437-Cys-446. N-linked (GlcNAc...) asparagine glycosylation is found at Asn-64 and Asn-115. The active-site Proton donor is Glu-147. 2 N-linked (GlcNAc...) asparagine glycosylation sites follow: Asn-232 and Asn-343. Residues 456 to 476 (SGLSLSSSSVITLCLLVLAGY) traverse the membrane as a helical segment. Over 477 to 481 (QSIQL) the chain is Cytoplasmic.

The protein belongs to the glycosyl hydrolase 56 family.

It localises to the membrane. It carries out the reaction Random hydrolysis of (1-&gt;4)-linkages between N-acetyl-beta-D-glucosamine and D-glucuronate residues in hyaluronate.. In terms of biological role, endo-hyaluronidase that degrades hyaluronan to smaller oligosaccharide fragments. Also has chondroitin sulfate hydrolase activity, The best substrate being the galactosaminidic linkage in the sequence of a trisulfated tetrasaccharide. In Mus musculus (Mouse), this protein is Hyaluronidase-4 (Hyal4).